Consider the following 146-residue polypeptide: MPEHILSGIKAIVAMKLRRKGLLQKEIAKIIKSDRSIVSHYLSGRYPKEKILNVAKIIEEMPPQYGAKFIHSLTDNKELAKNLIKELYGIKLFWDENSCIACGSCLGCAALTLDNFTVGIDEDTCHLCASCIFRCPTNSLKFIKEE.

4Fe-4S ferredoxin-type domains are found at residues 90–115 (IKLF…TLDN) and 116–145 (FTVG…FIKE). [4Fe-4S] cluster-binding residues include cysteine 125, cysteine 128, cysteine 131, and cysteine 135.

The cofactor is [4Fe-4S] cluster.

The protein is Ferredoxin-type protein FwdE (fwdE) of Methanocaldococcus jannaschii (strain ATCC 43067 / DSM 2661 / JAL-1 / JCM 10045 / NBRC 100440) (Methanococcus jannaschii).